The sequence spans 415 residues: Homoserine O-acetyltransferase (415 aa).

The AB hydrolase-1 domain occupies 47–369 (NAVLVCHGLT…HGHDAFLVEP (323 aa)). S155 (nucleophile) is an active-site residue. R226 lines the substrate pocket. Catalysis depends on residues D329 and H362. D363 is a substrate binding site. The segment at 383-415 (GVAGRAVTDTAPDGGEPDEDEDFAPVHSSLFSR) is disordered.

This sequence belongs to the AB hydrolase superfamily. MetX family. In terms of assembly, homodimer.

It localises to the cytoplasm. It carries out the reaction L-homoserine + acetyl-CoA = O-acetyl-L-homoserine + CoA. It functions in the pathway amino-acid biosynthesis; L-methionine biosynthesis via de novo pathway; O-acetyl-L-homoserine from L-homoserine: step 1/1. Its function is as follows. Transfers an acetyl group from acetyl-CoA to L-homoserine, forming acetyl-L-homoserine. The protein is Homoserine O-acetyltransferase of Haloferax volcanii (strain ATCC 29605 / DSM 3757 / JCM 8879 / NBRC 14742 / NCIMB 2012 / VKM B-1768 / DS2) (Halobacterium volcanii).